The following is a 473-amino-acid chain: Peptidoglycan DL-endopeptidase CwlO (473 aa).

The N-terminal stretch at 1–30 (MRKSLITLGLASVIGTSSFLIPFTSKTASA) is a signal peptide. 3 disordered regions span residues 31-52 (ETLD…SSIE), 79-98 (ALDT…KTKE), and 237-337 (EASE…GTVI). Residues 33–44 (LDEKKQKIESKQ) show a composition bias toward basic and acidic residues. Residues 241–250 (LANQKANTEA) are compositionally biased toward polar residues. Basic and acidic residues-rich tracts occupy residues 251-260 (EQARIKKEQE) and 267-277 (KKQEEAQKASD). Low complexity predominate over residues 291 to 337 (SSKASSSDDSSDNSSDNSSNGSSNSSSNGSSSKKSSGSNSNSGGTVI). The region spanning 340 to 471 (SGGIEGAISV…AAFKGVVRRV (132 aa)) is the NlpC/P60 domain. The active-site Nucleophile is cysteine 377. The active-site Proton acceptor is the histidine 431. Residue asparagine 443 is part of the active site.

This sequence belongs to the peptidase C40 family. Identified in the extracellular proteome as a number of processing products of about 50 and 30 kDa.

The protein localises to the secreted. Its subcellular location is the cell wall. Detected in exponentially growing cells, the 50 and 30 kDa processing products disappear upon entry into stationary phase with the concomitant appearance of a 20 kDa products. The 50 kDa form persists in the absence of extracellular proteases. The C-terminal part of CwlO shows a cell wall hydrolytic DL-endopeptidase activity. The polypeptide is Peptidoglycan DL-endopeptidase CwlO (cwlO) (Bacillus subtilis (strain 168)).